The following is a 248-amino-acid chain: Triosephosphate isomerase (248 aa).

Substrate contacts are provided by Asn11 and Lys13. His95 serves as the catalytic Electrophile. Glu165 acts as the Proton acceptor in catalysis.

The protein belongs to the triosephosphate isomerase family. As to quaternary structure, homodimer.

It localises to the cytoplasm. It catalyses the reaction dihydroxyacetone phosphate = methylglyoxal + phosphate. The catalysed reaction is D-glyceraldehyde 3-phosphate = dihydroxyacetone phosphate. It functions in the pathway carbohydrate degradation; glycolysis; D-glyceraldehyde 3-phosphate from glycerone phosphate: step 1/1. The protein operates within carbohydrate biosynthesis; gluconeogenesis. Triosephosphate isomerase is an extremely efficient metabolic enzyme that catalyzes the interconversion between dihydroxyacetone phosphate (DHAP) and D-glyceraldehyde-3-phosphate (G3P) in glycolysis and gluconeogenesis. In terms of biological role, it is also responsible for the non-negligible production of methylglyoxal a reactive cytotoxic side-product that modifies and can alter proteins, DNA and lipids. This is Triosephosphate isomerase (tpi1) from Xenopus laevis (African clawed frog).